Reading from the N-terminus, the 300-residue chain is Jacalin-related lectin 33 (300 aa).

Positions Met1–Val20 are disordered. Ala2 is subject to N-acetylalanine. 2 consecutive Jacalin-type lectin domains span residues Ala2–Thr146 and Ala154–Pro297.

The protein belongs to the jacalin lectin family. In terms of assembly, component of the PYK10 complex, at least composed of PYK10/BGLU23, BGLU21, BGLU22, JAL22, JAL23, PBP1/JAL30, PBP2/JAL31, JAL32, JAL33, JAL34, JAL35, GLL22 and GLL23.

Its function is as follows. Sugar-binding protein showing significant affinity for (Glc alpha(1-4)Glc)(3) maltohexaose, (Glc alpha(1-6)Glc)(3) isomaltohexaose, Gal alpha(1-4)Gal beta(1-4)Glc, GalNAc alpha(1-3)(Fuc alpha(1-2)) and Gal beta(1-3)(Fuc alpha(1-4))GlcNAc beta(1-3)Gal beta(1-4)Glc. This is Jacalin-related lectin 33 (JAL33) from Arabidopsis thaliana (Mouse-ear cress).